Reading from the N-terminus, the 545-residue chain is Thermosome subunit beta (545 aa).

Belongs to the TCP-1 chaperonin family. As to quaternary structure, forms a Heterooligomeric complex of two stacked eight-membered rings.

Its function is as follows. Molecular chaperone; binds unfolded polypeptides in vitro, and has a weak ATPase activity. This is Thermosome subunit beta (thsB) from Archaeoglobus fulgidus (strain ATCC 49558 / DSM 4304 / JCM 9628 / NBRC 100126 / VC-16).